We begin with the raw amino-acid sequence, 126 residues long: MQCTMLKAKLHQARVTHAELEYEGSCAIDGDLMDMAGILEYEQIQIYNIDNGERFETYAIRGEAGSKIISVNGAAAHKAQPGDRVIICAYANYTSAELINFKPSLIYMAEGNEVKGTSNAIPVQVA.

Ser-25 acts as the Schiff-base intermediate with substrate; via pyruvic acid in catalysis. Pyruvic acid (Ser) is present on Ser-25. A substrate-binding site is contributed by Thr-57. Tyr-58 functions as the Proton donor in the catalytic mechanism. Residue Gly-73–Ala-75 coordinates substrate.

Belongs to the PanD family. Heterooctamer of four alpha and four beta subunits. It depends on pyruvate as a cofactor. In terms of processing, is synthesized initially as an inactive proenzyme, which is activated by self-cleavage at a specific serine bond to produce a beta-subunit with a hydroxyl group at its C-terminus and an alpha-subunit with a pyruvoyl group at its N-terminus.

Its subcellular location is the cytoplasm. It catalyses the reaction L-aspartate + H(+) = beta-alanine + CO2. It functions in the pathway cofactor biosynthesis; (R)-pantothenate biosynthesis; beta-alanine from L-aspartate: step 1/1. Its function is as follows. Catalyzes the pyruvoyl-dependent decarboxylation of aspartate to produce beta-alanine. This Alcanivorax borkumensis (strain ATCC 700651 / DSM 11573 / NCIMB 13689 / SK2) protein is Aspartate 1-decarboxylase.